Here is a 207-residue protein sequence, read N- to C-terminus: uncharacterized protein (207 aa).

The protein resides in the mitochondrion. This is an uncharacterized protein from Marchantia polymorpha (Common liverwort).